The primary structure comprises 368 residues: Aminomethyltransferase (368 aa).

Belongs to the GcvT family. As to quaternary structure, the glycine cleavage system is composed of four proteins: P, T, L and H.

It carries out the reaction N(6)-[(R)-S(8)-aminomethyldihydrolipoyl]-L-lysyl-[protein] + (6S)-5,6,7,8-tetrahydrofolate = N(6)-[(R)-dihydrolipoyl]-L-lysyl-[protein] + (6R)-5,10-methylene-5,6,7,8-tetrahydrofolate + NH4(+). The glycine cleavage system catalyzes the degradation of glycine. In Thermoanaerobacter sp. (strain X514), this protein is Aminomethyltransferase.